The chain runs to 465 residues: GTPase Der (465 aa).

2 consecutive EngA-type G domains span residues 3–167 (PLVA…PERG) and 179–352 (IHIA…VSAL). GTP contacts are provided by residues 9–16 (GRPNVGKS), 57–61 (DTGGM), 119–122 (NKID), 185–192 (GRPNVGKS), 232–236 (DTAGL), and 297–300 (NKWD). Positions 353–437 (RQFSTSEVNK…PVRFLFREGD (85 aa)) constitute a KH-like domain.

This sequence belongs to the TRAFAC class TrmE-Era-EngA-EngB-Septin-like GTPase superfamily. EngA (Der) GTPase family. In terms of assembly, associates with the 50S ribosomal subunit.

GTPase that plays an essential role in the late steps of ribosome biogenesis. This chain is GTPase Der, found in Xylella fastidiosa (strain 9a5c).